The primary structure comprises 249 residues: MRGKTMGVKVKLLEYTPNPEKVVASAAKLCYSPVGVEEMAKDLSEEKVNKFLNMLMSYGHESPIEHVSFTFAAEGVSRSLTHQLVRHRIASYSQQSQRYVKLDQFQYIIPPEIDKDNNTRSIFIEAMENSQKAYDKIASTLEQKYISEGMKRKEAEKKAIEDARYVFPNACETKIIFTMNARTLMNFFRHRCCTRAQWEIRNLANEMLSEVKKVAPNLFKYSGPSCVNGNCPEGAMSCGKAAEMKKIYL.

The ThyX domain maps to 8–225 (VKVKLLEYTP…PNLFKYSGPS (218 aa)). Residues S62, 86-88 (RHR), and Q94 each bind FAD. DUMP contacts are provided by residues 83-86 (QLVR), 94-98 (QQSQR), and R164. The short motif at 86–96 (RHRIASYSQQS) is the ThyX motif element. Residues 180 to 182 (NAR) and N186 contribute to the FAD site. Residue R191 coordinates dUMP. The active-site Involved in ionization of N3 of dUMP, leading to its activation is the R191.

The protein belongs to the thymidylate synthase ThyX family. Homotetramer. The cofactor is FAD.

It catalyses the reaction dUMP + (6R)-5,10-methylene-5,6,7,8-tetrahydrofolate + NADPH + H(+) = dTMP + (6S)-5,6,7,8-tetrahydrofolate + NADP(+). It functions in the pathway pyrimidine metabolism; dTTP biosynthesis. Its function is as follows. Catalyzes the reductive methylation of 2'-deoxyuridine-5'-monophosphate (dUMP) to 2'-deoxythymidine-5'-monophosphate (dTMP) while utilizing 5,10-methylenetetrahydrofolate (mTHF) as the methyl donor, and NADPH and FADH(2) as the reductant. The sequence is that of Flavin-dependent thymidylate synthase from Clostridium tetani (strain Massachusetts / E88).